The primary structure comprises 66 residues: U1-theraphotoxin-Cg1d 2 (66 aa).

Positions 1 to 21 (MKMSALFPIFGLPLLFCNSFA) are cleaved as a signal peptide. Positions 22–29 (AELKATGR) are excised as a propeptide. 3 disulfide bridges follow: cysteine 31–cysteine 46, cysteine 38–cysteine 51, and cysteine 45–cysteine 58. At proline 63 the chain carries Proline amide.

This sequence belongs to the neurotoxin 10 (Hwtx-1) family. 46 (Jztx-7/10/12) subfamily. In terms of tissue distribution, expressed by the venom gland.

It localises to the secreted. Its function is as follows. Probable ion channel inhibitor. The chain is U1-theraphotoxin-Cg1d 2 from Chilobrachys guangxiensis (Chinese earth tiger tarantula).